Here is a 291-residue protein sequence, read N- to C-terminus: ATP synthase gamma chain (291 aa).

The protein belongs to the ATPase gamma chain family. F-type ATPases have 2 components, CF(1) - the catalytic core - and CF(0) - the membrane proton channel. CF(1) has five subunits: alpha(3), beta(3), gamma(1), delta(1), epsilon(1). CF(0) has three main subunits: a, b and c.

The protein resides in the cell inner membrane. Its function is as follows. Produces ATP from ADP in the presence of a proton gradient across the membrane. The gamma chain is believed to be important in regulating ATPase activity and the flow of protons through the CF(0) complex. This chain is ATP synthase gamma chain, found in Burkholderia ambifaria (strain MC40-6).